The primary structure comprises 333 residues: Holliday junction branch migration complex subunit RuvB (333 aa).

Residues 1–182 form a large ATPase domain (RuvB-L) region; that stretch reads MEERMVSAEA…FGVMARLEYY (182 aa). Residues Ile-21, Arg-22, Gly-63, Lys-66, Thr-67, Thr-68, 129 to 131, Arg-172, Tyr-182, and Arg-219 each bind ATP; that span reads EDY. Thr-67 lines the Mg(2+) pocket. A small ATPAse domain (RuvB-S) region spans residues 183-253; sequence NVEELTTIIE…RAIESLERLQ (71 aa). The head domain (RuvB-H) stretch occupies residues 256-333; sequence RLGLDHIDHK…EHFNMEVPNK (78 aa). Arg-311 and Arg-316 together coordinate DNA.

The protein belongs to the RuvB family. As to quaternary structure, homohexamer. Forms an RuvA(8)-RuvB(12)-Holliday junction (HJ) complex. HJ DNA is sandwiched between 2 RuvA tetramers; dsDNA enters through RuvA and exits via RuvB. An RuvB hexamer assembles on each DNA strand where it exits the tetramer. Each RuvB hexamer is contacted by two RuvA subunits (via domain III) on 2 adjacent RuvB subunits; this complex drives branch migration. In the full resolvosome a probable DNA-RuvA(4)-RuvB(12)-RuvC(2) complex forms which resolves the HJ.

Its subcellular location is the cytoplasm. It catalyses the reaction ATP + H2O = ADP + phosphate + H(+). In terms of biological role, the RuvA-RuvB-RuvC complex processes Holliday junction (HJ) DNA during genetic recombination and DNA repair, while the RuvA-RuvB complex plays an important role in the rescue of blocked DNA replication forks via replication fork reversal (RFR). RuvA specifically binds to HJ cruciform DNA, conferring on it an open structure. The RuvB hexamer acts as an ATP-dependent pump, pulling dsDNA into and through the RuvAB complex. RuvB forms 2 homohexamers on either side of HJ DNA bound by 1 or 2 RuvA tetramers; 4 subunits per hexamer contact DNA at a time. Coordinated motions by a converter formed by DNA-disengaged RuvB subunits stimulates ATP hydrolysis and nucleotide exchange. Immobilization of the converter enables RuvB to convert the ATP-contained energy into a lever motion, pulling 2 nucleotides of DNA out of the RuvA tetramer per ATP hydrolyzed, thus driving DNA branch migration. The RuvB motors rotate together with the DNA substrate, which together with the progressing nucleotide cycle form the mechanistic basis for DNA recombination by continuous HJ branch migration. Branch migration allows RuvC to scan DNA until it finds its consensus sequence, where it cleaves and resolves cruciform DNA. In Halalkalibacterium halodurans (strain ATCC BAA-125 / DSM 18197 / FERM 7344 / JCM 9153 / C-125) (Bacillus halodurans), this protein is Holliday junction branch migration complex subunit RuvB.